The following is a 492-amino-acid chain: Osmoregulated proline transporter OpuE (492 aa).

13 helical membrane-spanning segments follow: residues 3–23, 40–60, 62–82, 125–145, 161–181, 190–210, 224–244, 271–291, 314–334, 365–385, 394–414, 424–444, and 449–469; these read IEII…GWYA, LGPF…WMLM, VPGA…GLTI, IVSA…GMVS, GLFL…FLAV, AIMF…VGGV, LLDI…AWGL, IGMS…LIGV, ILFH…AIMS, LVMI…LLSL, LVGY…LLSL, ALAA…TGLA, and VYEI…VSMI.

It belongs to the sodium:solute symporter (SSF) (TC 2.A.21) family.

The protein localises to the cell membrane. The catalysed reaction is L-proline(in) + Na(+)(in) = L-proline(out) + Na(+)(out). Functionally, catalyzes the uptake of extracellular proline under high-osmolarity growth conditions. Essential for the use of proline present in the environment as an osmoprotectant. The protein is Osmoregulated proline transporter OpuE of Bacillus subtilis (strain 168).